A 346-amino-acid chain; its full sequence is CLOCK-interacting pacemaker (346 aa).

Positions 1–42 (MEKNQKCATEQERFKARSGHGDGQRAEPRKTQTTTESDKDSG) are enriched in basic and acidic residues. 2 disordered regions span residues 1-83 (MEKN…SQPQ) and 167-228 (CARK…KELD). The span at 50 to 68 (CLSSVEQTDTEEGPTTSRW) shows a compositional bias: polar residues. The span at 179–192 (NQTKRQCSKGHSGS) shows a compositional bias: basic residues. Positions 205–222 (GVQQGPVDQNVKESSVSA) are enriched in polar residues. The stretch at 283-315 (MKTKELARHNQATQSQLEKLQEQVQLYATAMSS) forms a coiled coil.

It is found in the nucleus. Its subcellular location is the cytoplasm. The protein resides in the cytosol. Its function is as follows. Transcriptional repressor which acts as a negative-feedback regulator of CLOCK-BMAL1 transcriptional activity in the circadian-clock mechanism. The physiological relevance of these observations is unsure. The chain is CLOCK-interacting pacemaker (cipc) from Xenopus laevis (African clawed frog).